We begin with the raw amino-acid sequence, 146 residues long: Transcriptional regulator MraZ (146 aa).

SpoVT-AbrB domains are found at residues 6–49 and 78–121; these read TYDH…TEEE and THEV…DQKS.

The protein belongs to the MraZ family. In terms of assembly, forms oligomers.

It is found in the cytoplasm. The protein resides in the nucleoid. The sequence is that of Transcriptional regulator MraZ from Mesoplasma florum (strain ATCC 33453 / NBRC 100688 / NCTC 11704 / L1) (Acholeplasma florum).